Consider the following 353-residue polypeptide: Ribosome biogenesis protein BRX1 homolog (353 aa).

Positions 1–10 (MAATKRKRRG) are enriched in basic residues. Positions 1 to 46 (MAATKRKRRGGLAVQAKKLKRDAKDGKLPAKANDVSEEAAEEEKDR) are disordered. The region spanning 60 to 249 (ERILIFSSRG…LIKIFQGSFG (190 aa)) is the Brix domain. A Glycyl lysine isopeptide (Lys-Gly) (interchain with G-Cter in SUMO2) cross-link involves residue Lys160. Ser261 carries the post-translational modification Phosphoserine. Lys276 is modified (N6-acetyllysine). Glycyl lysine isopeptide (Lys-Gly) (interchain with G-Cter in SUMO2) cross-links involve residues Lys314 and Lys322.

This sequence belongs to the BRX1 family.

Its subcellular location is the nucleus. It localises to the nucleolus. Required for biogenesis of the 60S ribosomal subunit. The sequence is that of Ribosome biogenesis protein BRX1 homolog (BRIX1) from Bos taurus (Bovine).